A 640-amino-acid chain; its full sequence is 1-deoxy-D-xylulose-5-phosphate synthase (640 aa).

Thiamine diphosphate is bound by residues His79 and 120–122 (AHS). Asp151 contributes to the Mg(2+) binding site. Thiamine diphosphate is bound by residues 152–153 (GA), Asn180, Tyr289, and Glu371. A Mg(2+)-binding site is contributed by Asn180.

Belongs to the transketolase family. DXPS subfamily. In terms of assembly, homodimer. The cofactor is Mg(2+). It depends on thiamine diphosphate as a cofactor.

The enzyme catalyses D-glyceraldehyde 3-phosphate + pyruvate + H(+) = 1-deoxy-D-xylulose 5-phosphate + CO2. The protein operates within metabolic intermediate biosynthesis; 1-deoxy-D-xylulose 5-phosphate biosynthesis; 1-deoxy-D-xylulose 5-phosphate from D-glyceraldehyde 3-phosphate and pyruvate: step 1/1. Functionally, catalyzes the acyloin condensation reaction between C atoms 2 and 3 of pyruvate and glyceraldehyde 3-phosphate to yield 1-deoxy-D-xylulose-5-phosphate (DXP). The polypeptide is 1-deoxy-D-xylulose-5-phosphate synthase (Erythrobacter litoralis (strain HTCC2594)).